A 404-amino-acid polypeptide reads, in one-letter code: Spore development regulator RYP2 (404 aa).

3 disordered regions span residues 1–46 (MSAP…RKAV), 200–231 (LLKRPLNRAEPDYPAPPTQPRTPERSGASSQQ), and 382–404 (SGQSFSQSAGHMQSPSQVPPAWG). In terms of domain architecture, Velvet spans 17 to 194 (LQSADFRLTV…ADQGVKLRIR (178 aa)). Residues 29-46 (NPERARVAGGKEKERKAV) show a composition bias toward basic and acidic residues. Residues 382 to 397 (SGQSFSQSAGHMQSPS) are compositionally biased toward polar residues.

Belongs to the velvet family. VosA subfamily. As to quaternary structure, forms a heterodimeric complex with RYP3; the formation of the RYP2-RYP3 complex is light-dependent.

Its subcellular location is the nucleus. In terms of biological role, component of the RYP2-RYP3 heterodimeric complex that plays a dual role in activating genes associated with spore maturation and repressing certain development-associated genes. The complex binds DNA through the DNA-binding domain of vosA that recognizes an 11-nucleotide consensus sequence 5'-CTGGCCGCGGC-3' consisting of two motifs in the promoters of key developmental regulatory genes. Required for viable spore production and regulation of sporulation in response to temperature and for the switch to yeast-form in the presence of host cells. The sequence is that of Spore development regulator RYP2 from Ajellomyces capsulatus (Darling's disease fungus).